The sequence spans 141 residues: Regulator of ribonuclease activity B (141 aa).

Acidic residues predominate over residues 119–132 (DEDFDDEDDDEDYD). The segment at 119-141 (DEDFDDEDDDEDYDKDGFPIERH) is disordered.

It belongs to the RraB family. As to quaternary structure, interacts with the C-terminal region of Rne.

Its subcellular location is the cytoplasm. Its function is as follows. Globally modulates RNA abundance by binding to RNase E (Rne) and regulating its endonucleolytic activity. Can modulate Rne action in a substrate-dependent manner by altering the composition of the degradosome. In Shewanella amazonensis (strain ATCC BAA-1098 / SB2B), this protein is Regulator of ribonuclease activity B.